A 397-amino-acid chain; its full sequence is Elongation factor Tu (397 aa).

The tr-type G domain maps to 10–206; sequence KPHVNIGTIG…AVDTSIPQPE (197 aa). Residues 19-26 form a G1 region; it reads GHIDHGKT. 19–26 provides a ligand contact to GTP; sequence GHIDHGKT. Thr-26 is a Mg(2+) binding site. A G2 region spans residues 62–66; sequence GITIS. Residues 83-86 form a G3 region; the sequence is DCPG. GTP contacts are provided by residues 83 to 87 and 138 to 141; these read DCPGH and NKSD. The G4 stretch occupies residues 138–141; it reads NKSD. The interval 176–178 is G5; it reads SAL.

It belongs to the TRAFAC class translation factor GTPase superfamily. Classic translation factor GTPase family. EF-Tu/EF-1A subfamily. In terms of assembly, monomer.

The protein resides in the cytoplasm. It catalyses the reaction GTP + H2O = GDP + phosphate + H(+). GTP hydrolase that promotes the GTP-dependent binding of aminoacyl-tRNA to the A-site of ribosomes during protein biosynthesis. This is Elongation factor Tu from Salinispora tropica (strain ATCC BAA-916 / DSM 44818 / JCM 13857 / NBRC 105044 / CNB-440).